A 184-amino-acid polypeptide reads, in one-letter code: MLQMAGQCSQNEYFDSLLHACIPCQLRCSSNTPPLTCQRYCNASVTNSVKGTNAILWTCLGLSLIISLAVFVLMFLLRKINSEPLKDEFKNTGSGLLGMANIDLEKSRTGDEIILPRGLEYTVEECTCEDCIKSKPKVDSDHCFPLPAMEEGATILVTTKTNDYCKSLPAALSATEIEKSISAR.

The Extracellular segment spans residues 1–54; it reads MLQMAGQCSQNEYFDSLLHACIPCQLRCSSNTPPLTCQRYCNASVTNSVKGTNA. The TNFR-Cys repeat unit spans residues 7 to 41; the sequence is QCSQNEYFDSLLHACIPCQLRCSSNTPPLTCQRYC. Cystine bridges form between cysteine 8/cysteine 21, cysteine 24/cysteine 37, and cysteine 28/cysteine 41. A helical; Signal-anchor for type III membrane protein membrane pass occupies residues 55 to 77; the sequence is ILWTCLGLSLIISLAVFVLMFLL. Topologically, residues 78 to 184 are cytoplasmic; that stretch reads RKINSEPLKD…TEIEKSISAR (107 aa).

As to quaternary structure, associates with TRAF1, TRAF2, TRAF3, TRAF5 and TRAF6. Expressed in mature B-cells, but not in T-cells or monocytes.

The protein localises to the cell membrane. It localises to the endomembrane system. Functionally, receptor for TNFSF13B/BLyS/BAFF and TNFSF13/APRIL. Promotes B-cell survival and plays a role in the regulation of humoral immunity. Activates NF-kappa-B and JNK. The polypeptide is Tumor necrosis factor receptor superfamily member 17 (TNFRSF17) (Homo sapiens (Human)).